Reading from the N-terminus, the 283-residue chain is ATP synthase gamma chain (283 aa).

This sequence belongs to the ATPase gamma chain family. In terms of assembly, F-type ATPases have 2 components, CF(1) - the catalytic core - and CF(0) - the membrane proton channel. CF(1) has five subunits: alpha(3), beta(3), gamma(1), delta(1), epsilon(1). CF(0) has three main subunits: a, b and c.

Its subcellular location is the cell membrane. Its function is as follows. Produces ATP from ADP in the presence of a proton gradient across the membrane. The gamma chain is believed to be important in regulating ATPase activity and the flow of protons through the CF(0) complex. The protein is ATP synthase gamma chain of Exiguobacterium sibiricum (strain DSM 17290 / CCUG 55495 / CIP 109462 / JCM 13490 / 255-15).